The chain runs to 184 residues: ATP-dependent protease subunit HslV (184 aa).

The active site involves Thr-8. Na(+)-binding residues include Gly-165, Asp-168, and Thr-171.

It belongs to the peptidase T1B family. HslV subfamily. In terms of assembly, a double ring-shaped homohexamer of HslV is capped on each side by a ring-shaped HslU homohexamer. The assembly of the HslU/HslV complex is dependent on binding of ATP.

The protein localises to the cytoplasm. The enzyme catalyses ATP-dependent cleavage of peptide bonds with broad specificity.. Allosterically activated by HslU binding. In terms of biological role, protease subunit of a proteasome-like degradation complex believed to be a general protein degrading machinery. In Pediococcus pentosaceus (strain ATCC 25745 / CCUG 21536 / LMG 10740 / 183-1w), this protein is ATP-dependent protease subunit HslV.